A 319-amino-acid chain; its full sequence is Acetyl esterase (319 aa).

The Involved in the stabilization of the negatively charged intermediate by the formation of the oxyanion hole signature appears at 91-93 (HGG). Catalysis depends on residues S165, D262, and H292.

This sequence belongs to the 'GDXG' lipolytic enzyme family. As to quaternary structure, homodimer. Interacts with MalT and MelA.

It is found in the cytoplasm. Functionally, displays esterase activity towards short chain fatty esters (acyl chain length of up to 8 carbons). Able to hydrolyze triacetylglycerol (triacetin) and tributyrylglycerol (tributyrin), but not trioleylglycerol (triolein) or cholesterol oleate. Negatively regulates MalT activity by antagonizing maltotriose binding. Inhibits MelA galactosidase activity. The polypeptide is Acetyl esterase (Shigella flexneri serotype 5b (strain 8401)).